The sequence spans 115 residues: DNA-binding protein STK_13740 (115 aa).

It belongs to the PDCD5 family.

This is DNA-binding protein STK_13740 from Sulfurisphaera tokodaii (strain DSM 16993 / JCM 10545 / NBRC 100140 / 7) (Sulfolobus tokodaii).